Consider the following 123-residue polypeptide: Small ribosomal subunit protein uS12cz/uS12cy (123 aa).

This sequence belongs to the universal ribosomal protein uS12 family. In terms of assembly, part of the 30S ribosomal subunit.

It localises to the plastid. It is found in the chloroplast. In terms of biological role, with S4 and S5 plays an important role in translational accuracy. Located at the interface of the 30S and 50S subunits. The sequence is that of Small ribosomal subunit protein uS12cz/uS12cy (rps12-A) from Coffea arabica (Arabian coffee).